The primary structure comprises 330 residues: Stomatin-1 (330 aa).

The segment covering 1 to 19 (MQPSETVEMQEMAQPSGQQ) has biased composition (polar residues). Positions 1 to 27 (MQPSETVEMQEMAQPSGQQRDVEARVQ) are disordered. Residues 42–62 (MFCIAMSYVLIFLTFPVSVFM) form a helical membrane-spanning segment.

The protein belongs to the band 7/mec-2 family.

The protein resides in the membrane. The sequence is that of Stomatin-1 (sto-1) from Caenorhabditis elegans.